The sequence spans 134 residues: Protein PsiB (134 aa).

Functionally, could be involved directly or indirectly in exopolysaccharide synthesis. The polypeptide is Protein PsiB (psiB) (Rhizobium leguminosarum bv. phaseoli).